A 46-amino-acid chain; its full sequence is Toxin Up-1 (46 aa).

It is found in the secreted. Its subcellular location is the nematocyst. The protein resides in the target cell membrane. Its function is as follows. This toxin is a potent hemolysin devoid of enzymatic activity. Its hemolytic activity is inhibited by sphingomyelin but not by cholesterol. In erythrocyte membranes, it causes numerous cell membrane ruptures. It also exerces cytotoxicity to different cell lines. It exerces a positive inotropic effect. Also causes hemorrhage and necrosis by dilation of the blood vessels in the skin, and vascular leakage of fluids and rupture of alveolar walls of the lungs. Is a potent ichtyotoxin. May act as a pore-forming toxin. This chain is Toxin Up-1, found in Urticina piscivora (Fish-eating sea anemone).